A 663-amino-acid chain; its full sequence is MNHAELRRLFAACDGNQSGRVEYEDFTTVCRELNVPADDIRTLFNKFDLDGDGYINFNDFSSSFQEVSEALNLASLGNCLHSQRRAWDEFENTLDGDVAFYLGRQWDALSELYEGIHSTSDELLLQQFEDLIRALVTEIREHRMESEQLETSLRRTEEVSSSQLAEMEEDLQQQLIHTERRVREEEQKKLDESIAMLQIKHENELADLQTTIERLTKQYQEESKLNTPREDSVKLRAQIKDLMEENEELRASLMKAQMNVSILQVELDKLKNAFTDQKRQHERESDDLKKMVMEFQSYSSHIEMLQEMNKSLYDSNDGLRSALSQENASTKRQLSPRNEVLPRKMKPIRQSTMNQSSFTNEEDTLALVKCWAEKYLDSGVSVQSEMDAMSGIDYDSDDSHHSVETVHHSYSCVPSELEVSEVKPEALRSVARSTVGSISSSLRRRLSAFPVKQNEEDLLDTQDLAPVYRLVLAGDAGSGKSSFLLRLSLNEFRGDIQTTLGVDFQIKKMLVDGEKTNLQIWDTAGQERFRSIARSYFRKAHGVLLLYDVTSESSFLNVREWVEQIRESTDEDIPMCIIGNKVDLRAARPEGSCVSSIHGEKLAMNYNALFCEASAKEGTNVIEAVLHLAREVKKHVKLGRRSESQVKLSLHKRRKTLSNCCGV.

2 consecutive EF-hand domains span residues 1–33 and 35–70; these read MNHA…CREL and VPAD…VSEA. Residues Asp14, Asn16, Ser18, Arg20, Asp25, Asp48, Asp50, Asp52, Tyr54, and Asp59 each contribute to the Ca(2+) site. The stretch at 122–297 forms a coiled coil; the sequence is ELLLQQFEDL…LKKMVMEFQS (176 aa). The span at 324–336 shows a compositional bias: polar residues; it reads SQENASTKRQLSP. The disordered stretch occupies residues 324-343; it reads SQENASTKRQLSPRNEVLPR. GTP is bound by residues 477–482, 580–583, and 615–616; these read GSGKSS, NKVD, and AK.

Belongs to the small GTPase superfamily. Rab family. In terms of assembly, homodimer.

The protein localises to the cytoplasm. It is found in the perinuclear region. Functionally, binds predominantly GDP, and also GTP. This chain is Ras and EF-hand domain-containing protein (rasef), found in Danio rerio (Zebrafish).